Here is a 490-residue protein sequence, read N- to C-terminus: MRIAILGRPNVGKSSLFNRLCRRSLAIVNSQEGTTRDRLYGEIRAWDSIIHVIDTGGVDQESTDRFQKQIHQQALAAAEEASVLLLVVDIRCGITKQDEELAKRLLPLKKPLILVMNKADSQQDLQRIHEFYGLGISDMIATSASHDKHIDLLLERIRQIAQIPVPSVEEQDVVQEDELPSEEAAISLHAFADETLFENESLSQEEASFLEELVAQTATPAPVDRPLKVALIGHPNVGKSSIINALLKEERCITDNSPGTTRDNIDVAYTHNNKEYVFIDTAGLRKTKSIKNSVEWMSSSRTEKAISRTDICLLVIDATQQLSYQDKRILSMIARYKKPHVILVNKWDLMFGVRMEHYVQDLRKMDPYIGQAHILCISAKQRRNLLQIFSAIDDIYTIATTKLSTSLVNKVLASAMQRHHPQVINGKRLRIYYAIHKTTTPFTFLLFINSNSLLTKPYELYLKNTLKAAFNLYRVPFDLEYKAKPARKSN.

2 EngA-type G domains span residues 1–165 (MRIA…QIPV) and 227–400 (LKVA…TIAT). Residues 7-14 (GRPNVGKS), 54-58 (DTGGV), 117-120 (NKAD), 233-240 (GHPNVGKS), 280-284 (DTAGL), and 345-348 (NKWD) each bind GTP. The KH-like domain occupies 401-485 (TKLSTSLVNK…PFDLEYKAKP (85 aa)).

The protein belongs to the TRAFAC class TrmE-Era-EngA-EngB-Septin-like GTPase superfamily. EngA (Der) GTPase family. In terms of assembly, associates with the 50S ribosomal subunit.

In terms of biological role, GTPase that plays an essential role in the late steps of ribosome biogenesis. The protein is GTPase Der of Chlamydia trachomatis serovar L2b (strain UCH-1/proctitis).